The primary structure comprises 225 residues: MTNVLIVEDEQAIRRFLRTALEGDGMRVFEAETLQRGLLEAATRKPDLIILDLGLPDGDGIEFIRDLRQWSAVPVIVLSARSEESDKIAALDAGADDYLSKPFGIGELQARLRVALRRHSATTAPDPLVKFSDVTVDLAARVIHRGEEEVHLTPIEFRLLAVLLNNAGKVLTQRQLLNQVWGPNAVEHSHYLRIYMGHLRQKLEQDPARPRHFITETGIGYRFML.

The Response regulatory domain occupies 3–116 (NVLIVEDEQA…ELQARLRVAL (114 aa)). Aspartate 52 bears the 4-aspartylphosphate mark. A DNA-binding region (ompR/PhoB-type) is located at residues 126 to 225 (DPLVKFSDVT…ETGIGYRFML (100 aa)).

In terms of processing, phosphorylated by KdpD.

It is found in the cytoplasm. Its function is as follows. Member of the two-component regulatory system KdpD/KdpE involved in the regulation of the kdp operon. The polypeptide is KDP operon transcriptional regulatory protein KdpE (kdpE) (Escherichia coli (strain K12)).